Reading from the N-terminus, the 205-residue chain is MTTQYGFFIDSSRCAGCKTCELACKDYKDLTPEVSFRRIYEYAGGDWQEDNGVWHQNVFAYYLSISCNHCEDPACTKVCPSGAMHKREDGFVVVDEDVCIGCRYCHMACPYGAPQYNETKGHMTKCDGCYDRVAEGKKPICVESCPLRALDFGPIDELRKKHGDLAAVAPLPRAHFTKPNIVIKPNANSRPTGDTTGYLANPKEV.

4Fe-4S ferredoxin-type domains are found at residues 5–33 (YGFFIDSSRCAGCKTCELACKDYKDLTPE), 59–89 (FAYYLSISCNHCEDPACTKVCPSGAMHKRED), and 90–119 (GFVVVDEDVCIGCRYCHMACPYGAPQYNET). Positions 14, 17, 20, 24, 67, 70, 75, 79, 99, 102, 105, 109, 126, 129, 141, and 145 each coordinate [4Fe-4S] cluster. Residues 184–205 (KPNANSRPTGDTTGYLANPKEV) are disordered. Residues 186-195 (NANSRPTGDT) are compositionally biased toward polar residues.

In terms of assembly, heterotrimeric enzyme composed of a catalytic heterodimer (DmsAB) and a membrane anchor protein (DmsC). It depends on [4Fe-4S] cluster as a cofactor.

Its function is as follows. Electron transfer subunit of the terminal reductase during anaerobic growth on various sulfoxide and N-oxide compounds. The sequence is that of Anaerobic dimethyl sulfoxide reductase chain B (dmsB) from Shigella flexneri.